The following is a 430-amino-acid chain: tRNA(Ile)-lysidine synthase (430 aa).

27–32 (SGGSDS) is a binding site for ATP.

The protein belongs to the tRNA(Ile)-lysidine synthase family.

The protein localises to the cytoplasm. The enzyme catalyses cytidine(34) in tRNA(Ile2) + L-lysine + ATP = lysidine(34) in tRNA(Ile2) + AMP + diphosphate + H(+). Its function is as follows. Ligates lysine onto the cytidine present at position 34 of the AUA codon-specific tRNA(Ile) that contains the anticodon CAU, in an ATP-dependent manner. Cytidine is converted to lysidine, thus changing the amino acid specificity of the tRNA from methionine to isoleucine. The protein is tRNA(Ile)-lysidine synthase of Rickettsia prowazekii (strain Madrid E).